A 263-amino-acid polypeptide reads, in one-letter code: Small ribosomal subunit protein eS4 (263 aa).

One can recognise an S4 RNA-binding domain in the interval 42-104; the sequence is LPLIIFLRNR…TGENFRLIYD (63 aa).

It belongs to the eukaryotic ribosomal protein eS4 family.

This is Small ribosomal subunit protein eS4 (rps4) from Ictalurus punctatus (Channel catfish).